The chain runs to 428 residues: Enolase (428 aa).

Glutamine 163 is a binding site for (2R)-2-phosphoglycerate. Glutamate 205 acts as the Proton donor in catalysis. Aspartate 242, glutamate 286, and aspartate 313 together coordinate Mg(2+). (2R)-2-phosphoglycerate contacts are provided by lysine 338, arginine 367, serine 368, and lysine 389. Lysine 338 acts as the Proton acceptor in catalysis.

This sequence belongs to the enolase family. Requires Mg(2+) as cofactor.

It is found in the cytoplasm. The protein resides in the secreted. Its subcellular location is the cell surface. The enzyme catalyses (2R)-2-phosphoglycerate = phosphoenolpyruvate + H2O. The protein operates within carbohydrate degradation; glycolysis; pyruvate from D-glyceraldehyde 3-phosphate: step 4/5. In terms of biological role, catalyzes the reversible conversion of 2-phosphoglycerate (2-PG) into phosphoenolpyruvate (PEP). It is essential for the degradation of carbohydrates via glycolysis. The polypeptide is Enolase (Syntrophus aciditrophicus (strain SB)).